The following is a 462-amino-acid chain: GTPase Der (462 aa).

EngA-type G domains are found at residues 3 to 166 and 175 to 348; these read PVIA…ITEM and IKIA…HSAI. Residues 9–16, 56–60, 118–121, 181–188, 228–232, and 293–296 contribute to the GTP site; these read GRPNVGKS, DTGGI, NKTD, DTAGV, and NKWD. The 85-residue stretch at 349-433 folds into the KH-like domain; sequence QSFSTPKLTR…PLKIEFKGGQ (85 aa).

This sequence belongs to the TRAFAC class TrmE-Era-EngA-EngB-Septin-like GTPase superfamily. EngA (Der) GTPase family. In terms of assembly, associates with the 50S ribosomal subunit.

In terms of biological role, GTPase that plays an essential role in the late steps of ribosome biogenesis. This Legionella pneumophila (strain Lens) protein is GTPase Der.